Consider the following 234-residue polypeptide: Ribosomal RNA large subunit methyltransferase E (234 aa).

Residues 1–37 (MSDDDRRRWKGPGPERQDSGRRSTERKVIARNARTES) form a disordered region. Positions 91, 93, 109, 125, and 149 each coordinate S-adenosyl-L-methionine. Lys-189 (proton acceptor) is an active-site residue.

The protein belongs to the class I-like SAM-binding methyltransferase superfamily. RNA methyltransferase RlmE family.

The protein localises to the cytoplasm. The catalysed reaction is uridine(2552) in 23S rRNA + S-adenosyl-L-methionine = 2'-O-methyluridine(2552) in 23S rRNA + S-adenosyl-L-homocysteine + H(+). Its function is as follows. Specifically methylates the uridine in position 2552 of 23S rRNA at the 2'-O position of the ribose in the fully assembled 50S ribosomal subunit. This is Ribosomal RNA large subunit methyltransferase E from Hyphomonas neptunium (strain ATCC 15444).